We begin with the raw amino-acid sequence, 1249 residues long: LRR receptor-like serine/threonine-protein kinase GSO1 (1249 aa).

An N-terminal signal peptide occupies residues 1 to 18 (MQPLVLLLLFILCFSGLG). Residues 19–876 (QPGIINNDLQ…QQGLSARSVV (858 aa)) are Extracellular-facing. Residues N77 and N117 are each glycosylated (N-linked (GlcNAc...) asparagine). LRR repeat units follow at residues 94-118 (FDNL…LSNL), 119-142 (TSLE…LGSL), 144-166 (NIRS…LGNL), 168-190 (NLQM…LGRL), 191-214 (VRVQ…LGNC), 216-238 (DLTV…LGRL), 239-262 (ENLE…LGEM), 264-285 (QLQY…SLAD), 286-310 (LGNL…FWNM), 312-334 (QLLD…ICSN), 336-359 (TNLE…LSKC), 360-383 (QSLK…LFEL), 385-407 (ELTD…ISNL), 408-431 (TNLQ…ISAL), 433-455 (KLEV…IGNC), 457-479 (SLKM…IGRL), 480-503 (KELN…LGNC), 505-527 (QLNI…FGFL), 528-551 (KGLE…LISL), 553-574 (NLTR…LCGS), 576-598 (SYLS…LGNS), 599-622 (QNLD…LGKI), 623-646 (RELS…LVLC), 648-670 (KLTH…LGKL), 671-694 (SQLG…LFNC), 696-718 (KLLV…IGNL), 719-742 (GALN…MGKL), 744-766 (KLYE…IGQL), 767-791 (QDLQ…IGTL), 792-815 (SKLE…VGDM), and 817-838 (SLGY…QFSR). Residues N213, N228, and N248 are each glycosylated (N-linked (GlcNAc...) asparagine). 3 N-linked (GlcNAc...) asparagine glycosylation sites follow: N298, N309, and N334. N-linked (GlcNAc...) asparagine glycosylation is found at N369, N393, and N406. N-linked (GlcNAc...) asparagine glycosylation occurs at N454. 4 N-linked (GlcNAc...) asparagine glycosylation sites follow: N537, N553, N558, and N565. Residues N693 and N708 are each glycosylated (N-linked (GlcNAc...) asparagine). N-linked (GlcNAc...) asparagine glycosylation is present at N779. N-linked (GlcNAc...) asparagine glycosylation occurs at N822. The helical transmembrane segment at 877 to 897 (IISAISALTAIGLMILVIALF) threads the bilayer. Over 898-1249 (FKQRHDFFKK…NNRTAGYKKL (352 aa)) the chain is Cytoplasmic. Residue T948 is modified to Phosphothreonine. The Protein kinase domain maps to 951–1240 (LSEEFMIGSG…ACDSLLHVYN (290 aa)). ATP-binding positions include 957–965 (IGSGGSGKV) and K979. Y1027 and Y1071 each carry phosphotyrosine. The active-site Proton acceptor is D1084. Residues Y1129 and Y1136 each carry the phosphotyrosine modification.

It belongs to the protein kinase superfamily. Ser/Thr protein kinase family. Interacts with CIF1 and CIF2. In terms of tissue distribution, mostly expressed in siliques, seeds, developing embryos and seedlings, detected in flower buds and roots, but not in leaves or stems.

The protein localises to the cell membrane. The catalysed reaction is L-seryl-[protein] + ATP = O-phospho-L-seryl-[protein] + ADP + H(+). It carries out the reaction L-threonyl-[protein] + ATP = O-phospho-L-threonyl-[protein] + ADP + H(+). Together with GSO2, receptor-like serine/threonine-kinase required during the development of the epidermal surface in embryos and cotyledons. In coordination with GSO2, regulates root growth through control of cell division and cell fate specification. Controls seedling root growth by modulating sucrose response after germination. Receptor of the peptide hormones CIF1 and CIF2 required for contiguous Casparian strip diffusion barrier formation in roots. Required for localizing CASP proteins into the Casparian strip following an uninterrupted, ring-like domain, to trigger endodermal differentiation and thus regulate potassium ion (K) homeostasis. Involved in the maintenance of water transport and root pressure. May also be involved in the regulation of suberin accumulation in the endodermis. This chain is LRR receptor-like serine/threonine-protein kinase GSO1, found in Arabidopsis thaliana (Mouse-ear cress).